The chain runs to 1147 residues: ATP-dependent helicase/deoxyribonuclease subunit B (1147 aa).

8–15 (GGSGAGKS) is a binding site for ATP. Residues Cys-780, Cys-1092, Cys-1095, and Cys-1101 each contribute to the [4Fe-4S] cluster site.

The protein belongs to the helicase family. AddB/RexB type 1 subfamily. Heterodimer of AddA and AddB. Mg(2+) is required as a cofactor. [4Fe-4S] cluster serves as cofactor.

Functionally, the heterodimer acts as both an ATP-dependent DNA helicase and an ATP-dependent, dual-direction single-stranded exonuclease. Recognizes the chi site generating a DNA molecule suitable for the initiation of homologous recombination. The AddB subunit has 5' -&gt; 3' nuclease activity but not helicase activity. The sequence is that of ATP-dependent helicase/deoxyribonuclease subunit B from Lachnoclostridium phytofermentans (strain ATCC 700394 / DSM 18823 / ISDg) (Clostridium phytofermentans).